Here is a 255-residue protein sequence, read N- to C-terminus: tRNA1(Val) (adenine(37)-N6)-methyltransferase (255 aa).

This sequence belongs to the methyltransferase superfamily. tRNA (adenine-N(6)-)-methyltransferase family.

The protein resides in the cytoplasm. The enzyme catalyses adenosine(37) in tRNA1(Val) + S-adenosyl-L-methionine = N(6)-methyladenosine(37) in tRNA1(Val) + S-adenosyl-L-homocysteine + H(+). Functionally, specifically methylates the adenine in position 37 of tRNA(1)(Val) (anticodon cmo5UAC). In Porphyromonas gingivalis (strain ATCC 33277 / DSM 20709 / CIP 103683 / JCM 12257 / NCTC 11834 / 2561), this protein is tRNA1(Val) (adenine(37)-N6)-methyltransferase.